The sequence spans 378 residues: Ferrochelatase (378 aa).

Positions 214 and 295 each coordinate Fe cation.

It belongs to the ferrochelatase family.

Its subcellular location is the cytoplasm. It carries out the reaction heme b + 2 H(+) = protoporphyrin IX + Fe(2+). The protein operates within porphyrin-containing compound metabolism; protoheme biosynthesis; protoheme from protoporphyrin-IX: step 1/1. Its function is as follows. Catalyzes the ferrous insertion into protoporphyrin IX. This is Ferrochelatase from Hydrogenovibrio crunogenus (strain DSM 25203 / XCL-2) (Thiomicrospira crunogena).